Reading from the N-terminus, the 262-residue chain is Phosphate import ATP-binding protein PstB (262 aa).

The ABC transporter domain occupies 15-257; it reads AKASNLNLWY…PQKSKTEQYI (243 aa). An ATP-binding site is contributed by 47–54; the sequence is GPSGCGKS.

This sequence belongs to the ABC transporter superfamily. Phosphate importer (TC 3.A.1.7) family. In terms of assembly, the complex is composed of two ATP-binding proteins (PstB), two transmembrane proteins (PstC and PstA) and a solute-binding protein (PstS).

The protein resides in the cell inner membrane. The enzyme catalyses phosphate(out) + ATP + H2O = ADP + 2 phosphate(in) + H(+). Its function is as follows. Part of the ABC transporter complex PstSACB involved in phosphate import. Responsible for energy coupling to the transport system. This is Phosphate import ATP-binding protein PstB from Wolinella succinogenes (strain ATCC 29543 / DSM 1740 / CCUG 13145 / JCM 31913 / LMG 7466 / NCTC 11488 / FDC 602W) (Vibrio succinogenes).